Consider the following 726-residue polypeptide: Catalase-peroxidase (726 aa).

Residues 1–33 (MSTTDDTHNTLSTGKCPFHQGGHDRSAGAGTAS) are disordered. The segment at residues 105–226 (WHGAGTYRSI…LGATEMGLIY (122 aa)) is a cross-link (tryptophyl-tyrosyl-methioninium (Trp-Tyr) (with M-252)). The Proton acceptor role is filled by H106. A cross-link (tryptophyl-tyrosyl-methioninium (Tyr-Met) (with W-105)) is located at residues 226 to 252 (YVNPEGPDHSGEPLSAAAAIRATFGNM). Residue H267 participates in heme b binding.

It belongs to the peroxidase family. Peroxidase/catalase subfamily. In terms of assembly, homodimer or homotetramer. Heme b is required as a cofactor. In terms of processing, formation of the three residue Trp-Tyr-Met cross-link is important for the catalase, but not the peroxidase activity of the enzyme.

The enzyme catalyses H2O2 + AH2 = A + 2 H2O. It catalyses the reaction 2 H2O2 = O2 + 2 H2O. In terms of biological role, bifunctional enzyme with both catalase and broad-spectrum peroxidase activity. The sequence is that of Catalase-peroxidase from Salmonella choleraesuis (strain SC-B67).